We begin with the raw amino-acid sequence, 758 residues long: Vitamin K-dependent gamma-carboxylase (758 aa).

The tract at residues 1 to 34 (MAVSARPARAPRGPDKVKKDKAAQTSGPRQGSQM) is disordered. Position 2 is an N-acetylalanine (Ala2). Topologically, residues 2-60 (AVSARPARAPRGPDKVKKDKAAQTSGPRQGSQMGKLLGFEWTDVSSWERLVTLLNRPTD) are cytoplasmic. The segment covering 12-22 (RGPDKVKKDKA) has biased composition (basic and acidic residues). Residues 23–33 (AQTSGPRQGSQ) show a composition bias toward polar residues. Residues 61-81 (PASLAVFRFLFGLMMVLDIPQ) form a helical membrane-spanning segment. The Lumenal segment spans residues 82–113 (ERGLSSLDRRYLDGLEVCRFPLLDALQPLPLD). Cys99 and Cys450 are oxidised to a cystine. Residues 114–134 (WMYLVYTIMFLGALGMMLGLC) form a helical membrane-spanning segment. At 135-136 (YR) the chain is on the cytoplasmic side. A helical transmembrane segment spans residues 137–157 (ISCVLFLLPYWYVFLLDKTSW). The Lumenal segment spans residues 158 to 292 (NNHSYLYGLL…VSYFHCMNSQ (135 aa)). Residues 293–313 (LFSIGMFPYVMLASSPLFCSP) traverse the membrane as a helical segment. Topologically, residues 314 to 361 (EWPRKLVAHCPKKLQELLPLRTAPQPSTSCMYKRSRARGSQKPGLRHQ) are cytoplasmic. Residues 362–382 (LSTAFTLLYLLEQLFLPYSHF) form a helical membrane-spanning segment. The Lumenal segment spans residues 383-758 (LTQGYNNWTN…PDSHPVHSEF (376 aa)). Residues 726 to 758 (RPFEPAGEPSPVNTDSSNPNPPEPDSHPVHSEF) are disordered. A compositionally biased stretch (basic and acidic residues) spans 749 to 758 (PDSHPVHSEF).

Belongs to the vitamin K-dependent gamma-carboxylase family. As to quaternary structure, monomer. May interact with CALU.

It is found in the endoplasmic reticulum membrane. It catalyses the reaction 4-carboxy-L-glutamyl-[protein] + 2,3-epoxyphylloquinone + H2O + H(+) = phylloquinol + L-glutamyl-[protein] + CO2 + O2. Functionally, mediates the vitamin K-dependent carboxylation of glutamate residues to calcium-binding gamma-carboxyglutamate (Gla) residues with the concomitant conversion of the reduced hydroquinone form of vitamin K to vitamin K epoxide. Catalyzes gamma-carboxylation of various proteins, such as blood coagulation factors (F2, F7, F9 and F10), osteocalcin (BGLAP) or matrix Gla protein (MGP). This is Vitamin K-dependent gamma-carboxylase (GGCX) from Ovis aries (Sheep).